A 336-amino-acid chain; its full sequence is Protein REVEILLE 7-like (336 aa).

One can recognise an HTH myb-type domain in the interval 60 to 114 (TVTKQREKWSEEEHDRFLEAIKLYGRGWRQIQEHIGTKTAVQIRSHAQKFFSKMA). The H-T-H motif DNA-binding region spans 87–110 (WRQIQEHIGTKTAVQIRSHAQKFF). The segment at 114 to 197 (AQEADSRSEG…KQPFKDDSDI (84 aa)) is disordered. Positions 134–144 (RPKRKPAHPYP) are enriched in basic residues. The segment covering 145 to 158 (RKSPVPYTQSPPPN) has biased composition (pro residues). The segment covering 167-189 (KSPTSVLSSFGSEDQNNYTTSKQ) has biased composition (polar residues).

It localises to the nucleus. Its function is as follows. Probable transcription factor. The protein is Protein REVEILLE 7-like (RVE7L) of Arabidopsis thaliana (Mouse-ear cress).